Here is a 146-residue protein sequence, read N- to C-terminus: MHHEVMSGLHVNSLRKHEILRKEQLIAALFVSGKSCKGEYLKLFYQKTVSDVKSRSPAVQVLFAVSKKNVPHAVSRNRLKRLMREAYRNEKQQLFTLCDEGRPEMSGIHLQIAVLYIGGRKSFPSFELLRQEISRLMHNIRLSELT.

Belongs to the RnpA family. As to quaternary structure, consists of a catalytic RNA component (M1 or rnpB) and a protein subunit.

The enzyme catalyses Endonucleolytic cleavage of RNA, removing 5'-extranucleotides from tRNA precursor.. In terms of biological role, RNaseP catalyzes the removal of the 5'-leader sequence from pre-tRNA to produce the mature 5'-terminus. It can also cleave other RNA substrates such as 4.5S RNA. The protein component plays an auxiliary but essential role in vivo by binding to the 5'-leader sequence and broadening the substrate specificity of the ribozyme. The protein is Ribonuclease P protein component of Chlorobium phaeobacteroides (strain DSM 266 / SMG 266 / 2430).